The sequence spans 216 residues: Inner membrane assembly complex subunit 22 (216 aa).

The N-terminal 26 residues, M1–T26, are a transit peptide targeting the mitochondrion. At V27–T43 the chain is on the mitochondrial matrix side. A helical membrane pass occupies residues M44–A63. The stretch at E64–N93 forms a coiled coil. Over E64–L216 the chain is Mitochondrial intermembrane.

As to quaternary structure, component of the inner membrane assembly (INA) complex, composed of INA17 and INA22. Interacts with a subset of F(1)F(0)-ATP synthase subunits of the F(1)-domain and the peripheral stalk.

The protein resides in the mitochondrion inner membrane. Its function is as follows. Component of the INA complex (INAC) that promotes the biogenesis of mitochondrial F(1)F(0)-ATP synthase. INAC facilitates the assembly of the peripheral stalk and promotes the assembly of the catalytic F(1)-domain with the membrane-embedded F(0)-domain. The sequence is that of Inner membrane assembly complex subunit 22 from Saccharomyces cerevisiae (strain ATCC 204508 / S288c) (Baker's yeast).